The chain runs to 400 residues: ATP-dependent RNA helicase fal-1 (400 aa).

The Q motif motif lies at 26-54; the sequence is PTFESMSLKESLLRGIYAYGYESPSAVQS. The region spanning 57–227 is the Helicase ATP-binding domain; it reads IVQICKGRDT…TKFMTDPVRI (171 aa). 70–77 contacts ATP; that stretch reads AQSGTGKT. Positions 175 to 178 match the DEAD box motif; it reads DEAD. In terms of domain architecture, Helicase C-terminal spans 238–399; sequence GLKQYFIAVE…EMPMNVADLI (162 aa).

It belongs to the DEAD box helicase family. DDX48/FAL1 subfamily.

Its subcellular location is the nucleus. The protein localises to the nucleolus. It carries out the reaction ATP + H2O = ADP + phosphate + H(+). Its function is as follows. ATP-dependent RNA helicase involved in 40S ribosomal subunit biogenesis. Required for the processing and cleavage of 35S pre-rRNA at sites A0, A1, and A2, leading to mature 18S rRNA. This is ATP-dependent RNA helicase fal-1 (fal-1) from Neurospora crassa (strain ATCC 24698 / 74-OR23-1A / CBS 708.71 / DSM 1257 / FGSC 987).